Reading from the N-terminus, the 196-residue chain is Vacuolar iron transporter homolog 2 (196 aa).

Over 1-31 (MDQSGSNTNMDIEKESTTFDYSKRSQWLRAA) the chain is Cytoplasmic. A helical transmembrane segment spans residues 32 to 52 (VLGANDGLVSTASLMMGVGAV). The Vacuolar portion of the chain corresponds to 53 to 59 (KHDVKAM). The chain crosses the membrane as a helical span at residues 60–80 (ILSGFAGMVAGACSMAIGEFV). Over 81–112 (SVYSQYDIEVAQMERDSVEIEKEKLPSPMQAA) the chain is Cytoplasmic. A helical transmembrane segment spans residues 113–133 (AASALAFSAGAIVPLLAAAFV). The Vacuolar segment spans residues 134–139 (KEYKMR). Residues 140–160 (IISVVVAVTVALMVFGWLGAA) form a helical membrane-spanning segment. Over 161–172 (LGKAPAVRSSAR) the chain is Cytoplasmic. Residues 173–193 (VLFGGWLAMAVTFGLTKLIGL) traverse the membrane as a helical segment. Residues 194-196 (YGL) lie on the Vacuolar side of the membrane.

The protein belongs to the CCC1 family. In terms of tissue distribution, expressed in roots, leaves and inflorescences.

Its subcellular location is the vacuole membrane. The catalysed reaction is Fe(2+)(in) = Fe(2+)(out). Functionally, vacuolar iron transporter involved in the transfer of iron ions from the cytosol to the vacuole for intracellular iron storage. Involved in regulation of cellular iron homeostasis. Vacuolar iron storage is required for seed embryo and seedling development. In Arabidopsis thaliana (Mouse-ear cress), this protein is Vacuolar iron transporter homolog 2.